Consider the following 252-residue polypeptide: Probable phosphatase Shewmr4_2619 (252 aa).

Zn(2+) contacts are provided by H8, H10, H16, H41, E74, H102, H132, D193, and H195.

Belongs to the PHP family. Requires Zn(2+) as cofactor.

This is Probable phosphatase Shewmr4_2619 from Shewanella sp. (strain MR-4).